A 503-amino-acid polypeptide reads, in one-letter code: Aspartyl/glutamyl-tRNA(Asn/Gln) amidotransferase subunit B (503 aa).

It belongs to the GatB/GatE family. GatB subfamily. In terms of assembly, heterotrimer of A, B and C subunits.

The enzyme catalyses L-glutamyl-tRNA(Gln) + L-glutamine + ATP + H2O = L-glutaminyl-tRNA(Gln) + L-glutamate + ADP + phosphate + H(+). It carries out the reaction L-aspartyl-tRNA(Asn) + L-glutamine + ATP + H2O = L-asparaginyl-tRNA(Asn) + L-glutamate + ADP + phosphate + 2 H(+). In terms of biological role, allows the formation of correctly charged Asn-tRNA(Asn) or Gln-tRNA(Gln) through the transamidation of misacylated Asp-tRNA(Asn) or Glu-tRNA(Gln) in organisms which lack either or both of asparaginyl-tRNA or glutaminyl-tRNA synthetases. The reaction takes place in the presence of glutamine and ATP through an activated phospho-Asp-tRNA(Asn) or phospho-Glu-tRNA(Gln). The chain is Aspartyl/glutamyl-tRNA(Asn/Gln) amidotransferase subunit B from Ruegeria pomeroyi (strain ATCC 700808 / DSM 15171 / DSS-3) (Silicibacter pomeroyi).